A 447-amino-acid chain; its full sequence is Ribulose bisphosphate carboxylase large chain (447 aa).

Position 5 is an N6,N6,N6-trimethyllysine (Lys-5). Substrate is bound by residues Asn-114 and Thr-164. The active-site Proton acceptor is Lys-166. Position 168 (Lys-168) interacts with substrate. The Mg(2+) site is built by Lys-192, Asp-194, and Glu-195. Lys-192 is modified (N6-carboxylysine). His-285 (proton acceptor) is an active-site residue. Substrate is bound by residues Arg-286, His-318, and Ser-370.

The protein belongs to the RuBisCO large chain family. Type I subfamily. In terms of assembly, heterohexadecamer of 8 large chains and 8 small chains; disulfide-linked. The disulfide link is formed within the large subunit homodimers. It depends on Mg(2+) as a cofactor. Post-translationally, the disulfide bond which can form in the large chain dimeric partners within the hexadecamer appears to be associated with oxidative stress and protein turnover.

The protein localises to the plastid. Its subcellular location is the chloroplast. It carries out the reaction 2 (2R)-3-phosphoglycerate + 2 H(+) = D-ribulose 1,5-bisphosphate + CO2 + H2O. It catalyses the reaction D-ribulose 1,5-bisphosphate + O2 = 2-phosphoglycolate + (2R)-3-phosphoglycerate + 2 H(+). RuBisCO catalyzes two reactions: the carboxylation of D-ribulose 1,5-bisphosphate, the primary event in carbon dioxide fixation, as well as the oxidative fragmentation of the pentose substrate in the photorespiration process. Both reactions occur simultaneously and in competition at the same active site. In Camassia leichtlinii (Western quamash), this protein is Ribulose bisphosphate carboxylase large chain.